The sequence spans 214 residues: Adenylate kinase (214 aa).

10-15 (GAGKGT) provides a ligand contact to ATP. Positions 30 to 59 (STGDMLRAAVKAGTPLGLEAKKVMDAGQLV) are NMP. AMP-binding positions include Thr31, Arg36, 57 to 59 (QLV), 85 to 88 (GFPR), and Gln92. Residues 122-159 (GRRVHPGSGRVYHIVYNPPKVEGKDDVTGEDLAIRPDD) are LID. ATP contacts are provided by residues Arg123 and 132–133 (VY). Positions 156 and 167 each coordinate AMP. Gln200 provides a ligand contact to ATP.

This sequence belongs to the adenylate kinase family. In terms of assembly, monomer.

It is found in the cytoplasm. The enzyme catalyses AMP + ATP = 2 ADP. It functions in the pathway purine metabolism; AMP biosynthesis via salvage pathway; AMP from ADP: step 1/1. Functionally, catalyzes the reversible transfer of the terminal phosphate group between ATP and AMP. Plays an important role in cellular energy homeostasis and in adenine nucleotide metabolism. This Shewanella loihica (strain ATCC BAA-1088 / PV-4) protein is Adenylate kinase.